Consider the following 209-residue polypeptide: Abscisic acid receptor PYL5 (209 aa).

The interval 44 to 196 (HAPGEHQCSS…NLTSLAEVSE (153 aa)) is START-like. C51 and C177 are oxidised to a cystine. Abscisate-binding positions include K80, 109 to 114 (ATTSTE), 136 to 142 (RLRNYSS), and E161. Positions 105-109 (TGLPA) match the Gate loop motif. The Latch loop signature appears at 135–137 (HRL).

It belongs to the PYR/PYL/RCAR abscisic acid intracellular receptor family. As to quaternary structure, monomer. Interacts with PP2C30. Binding to PP2C30 is dependent on the presence of abscisic acid (ABA). Interacts with PP2C51. Binding to PP2C51 is dependent on the presence of ABA. Interacts with PP2C50. Binding to PP2C50 is dependent on the presence of ABA. Interacts with PP2C53. Expressed in leaf sheaths and leaf blades. Expressed at low levels in roots, flowers and seeds.

The protein localises to the nucleus. It localises to the cytoplasm. The protein resides in the cytosol. Its function is as follows. Intracellular abscisic acid (ABA) receptor that functions as a positive regulator of ABA signaling pathway. Together with ABI5, PP2C30 and SAPK2, is part of an ABA signaling unit that modulates seed germination and early seedling growth. Acts as a positive regulator of abiotic stress-responsive gene expression. Inhibits the protein phosphatases PP2C06 and PP2C09 when activated by ABA. The chain is Abscisic acid receptor PYL5 from Oryza sativa subsp. japonica (Rice).